The chain runs to 227 residues: MAHSFQLGFQDATSPIMEELLHFHDHTLMIVFLISSLVLYIITLMLTTKLTHTSTMDAQEVETVWTILPAIILILIALPSLRILYLMDEINTPSLTVKTMGHQWYWSYEYTDYEDLNFDSYMIPTADLKPGELRLLEVDNRVVLPMELPIRMLISSEDVLHSWAVPSLGLKTDAIPGRLNQATLMSTRPGLYYGQCSEICGSNHSFMPIVLELVPLKHFENWSTSMI.

Residues 1–14 (MAHSFQLGFQDATS) are Mitochondrial intermembrane-facing. A helical transmembrane segment spans residues 15-45 (PIMEELLHFHDHTLMIVFLISSLVLYIITLM). Residues 46–59 (LTTKLTHTSTMDAQ) lie on the Mitochondrial matrix side of the membrane. The helical transmembrane segment at 60–87 (EVETVWTILPAIILILIALPSLRILYLM) threads the bilayer. The Mitochondrial intermembrane segment spans residues 88 to 227 (DEINTPSLTV…HFENWSTSMI (140 aa)). Cu cation contacts are provided by histidine 161, cysteine 196, glutamate 198, cysteine 200, histidine 204, and methionine 207. Glutamate 198 is a binding site for Mg(2+).

It belongs to the cytochrome c oxidase subunit 2 family. As to quaternary structure, component of the cytochrome c oxidase (complex IV, CIV), a multisubunit enzyme composed of 14 subunits. The complex is composed of a catalytic core of 3 subunits MT-CO1, MT-CO2 and MT-CO3, encoded in the mitochondrial DNA, and 11 supernumerary subunits COX4I, COX5A, COX5B, COX6A, COX6B, COX6C, COX7A, COX7B, COX7C, COX8 and NDUFA4, which are encoded in the nuclear genome. The complex exists as a monomer or a dimer and forms supercomplexes (SCs) in the inner mitochondrial membrane with NADH-ubiquinone oxidoreductase (complex I, CI) and ubiquinol-cytochrome c oxidoreductase (cytochrome b-c1 complex, complex III, CIII), resulting in different assemblies (supercomplex SCI(1)III(2)IV(1) and megacomplex MCI(2)III(2)IV(2)). Found in a complex with TMEM177, COA6, COX18, COX20, SCO1 and SCO2. Interacts with TMEM177 in a COX20-dependent manner. Interacts with COX20. Interacts with COX16. It depends on Cu cation as a cofactor.

It localises to the mitochondrion inner membrane. The catalysed reaction is 4 Fe(II)-[cytochrome c] + O2 + 8 H(+)(in) = 4 Fe(III)-[cytochrome c] + 2 H2O + 4 H(+)(out). Component of the cytochrome c oxidase, the last enzyme in the mitochondrial electron transport chain which drives oxidative phosphorylation. The respiratory chain contains 3 multisubunit complexes succinate dehydrogenase (complex II, CII), ubiquinol-cytochrome c oxidoreductase (cytochrome b-c1 complex, complex III, CIII) and cytochrome c oxidase (complex IV, CIV), that cooperate to transfer electrons derived from NADH and succinate to molecular oxygen, creating an electrochemical gradient over the inner membrane that drives transmembrane transport and the ATP synthase. Cytochrome c oxidase is the component of the respiratory chain that catalyzes the reduction of oxygen to water. Electrons originating from reduced cytochrome c in the intermembrane space (IMS) are transferred via the dinuclear copper A center (CU(A)) of subunit 2 and heme A of subunit 1 to the active site in subunit 1, a binuclear center (BNC) formed by heme A3 and copper B (CU(B)). The BNC reduces molecular oxygen to 2 water molecules using 4 electrons from cytochrome c in the IMS and 4 protons from the mitochondrial matrix. This chain is Cytochrome c oxidase subunit 2 (MT-CO2), found in Cephalopachus bancanus (Western tarsier).